Reading from the N-terminus, the 311-residue chain is Protoheme IX farnesyltransferase (311 aa).

9 helical membrane passes run 32 to 52, 53 to 73, 98 to 118, 120 to 140, 153 to 173, 180 to 200, 226 to 246, 248 to 268, and 285 to 305; these read VMSL…VVVD, PLYG…AGAL, ISRG…VFLM, VLIN…YIVI, IVIG…AATG, FLLF…LCLF, ILVY…TGYA, IIYG…AYRL, and FFFS…EFLI.

It belongs to the UbiA prenyltransferase family. Protoheme IX farnesyltransferase subfamily.

It is found in the cell inner membrane. The catalysed reaction is heme b + (2E,6E)-farnesyl diphosphate + H2O = Fe(II)-heme o + diphosphate. It participates in porphyrin-containing compound metabolism; heme O biosynthesis; heme O from protoheme: step 1/1. Its function is as follows. Converts heme B (protoheme IX) to heme O by substitution of the vinyl group on carbon 2 of heme B porphyrin ring with a hydroxyethyl farnesyl side group. The polypeptide is Protoheme IX farnesyltransferase (Bartonella bacilliformis (strain ATCC 35685 / KC583 / Herrer 020/F12,63)).